A 325-amino-acid polypeptide reads, in one-letter code: Intelectin (325 aa).

Positions 1–23 (MKYCVLLIMIHLLLVELPQFPEA) are cleaved as a signal peptide. Residues 44–266 (IRSSYIGRSC…AAMAICSGVK (223 aa)) form the Fibrinogen C-terminal domain. Cys53 and Cys82 are oxidised to a cystine. Positions 98, 99, 101, 104, 109, 110, 145, 274, 286, and 294 each coordinate Ca(2+). Intrachain disulfides connect Cys106-Cys292 and Cys262-Cys277. Residues 274–275 (EH) and Glu286 each bind a carbohydrate.

As to expression, expressed at high levels in caudal kidney, liver, and swim bladder. Also expressed in gill, spleen, intestine and head kidney. Not detected in heart.

Functionally, may be involved in innate immune surveillance. May specifically recognize carbohydrate chains of pathogens and bacterial components in a calcium-dependent manner. In vitro binds N-acetylglucosamine residues. This Oncorhynchus mykiss (Rainbow trout) protein is Intelectin.